The following is a 161-amino-acid chain: Large ribosomal subunit protein uL11 (161 aa).

It belongs to the universal ribosomal protein uL11 family. In terms of assembly, part of the ribosomal stalk of the 50S ribosomal subunit. Interacts with L10 and the large rRNA to form the base of the stalk. L10 forms an elongated spine to which L12 dimers bind in a sequential fashion forming a multimeric L10(L12)X complex.

Forms part of the ribosomal stalk which helps the ribosome interact with GTP-bound translation factors. The polypeptide is Large ribosomal subunit protein uL11 (Methanosarcina mazei (strain ATCC BAA-159 / DSM 3647 / Goe1 / Go1 / JCM 11833 / OCM 88) (Methanosarcina frisia)).